The following is a 151-amino-acid chain: Putative calcium-binding protein CML23 (151 aa).

EF-hand domains are found at residues 2 to 37 (VASD…SLGE), 39 to 74 (MPDE…MEAD), 84 to 119 (ETCR…LGTH), and 120 to 151 (LDVA…MMMA). The Ca(2+) site is built by Asp15, Asp17, Asp19, Lys21, Glu26, Asp52, Asp54, Asp56, and Glu63. Positions 133, 135, 137, and 144 each coordinate Ca(2+).

In terms of biological role, potential calcium sensor. The polypeptide is Putative calcium-binding protein CML23 (CML23) (Oryza sativa subsp. japonica (Rice)).